The chain runs to 126 residues: UPF0325 protein PBPRA2971 (126 aa).

It belongs to the UPF0325 family.

The sequence is that of UPF0325 protein PBPRA2971 from Photobacterium profundum (strain SS9).